The sequence spans 225 residues: MAKVSDLALLLVAGMAISLYIQETGAVKFDIKNQCGYTVWAAGLPGGGQQLTQGQTWTVNLAAGTQSARFWGRTGCSFDASGKGTCQTGDCGGQLSCTVSGAVPATLAEYTQSDQDYYDVSLVDGFNIPLSINPTNAQCTAPACKADVNAVCPAELKVDGGCKSACAAFQTDQYCCTGTYANSCPATNYSMIFKNQCPQAYSYPKDDTATFACPSGTDYSIVFCP.

The first 26 residues, 1 to 26, serve as a signal peptide directing secretion; it reads MAKVSDLALLLVAGMAISLYIQETGA. Intrachain disulfides connect C35/C224, C76/C86, C91/C97, C139/C213, C144/C197, C152/C162, C166/C175, and C176/C184. N188 carries N-linked (GlcNAc...) asparagine glycosylation.

It belongs to the thaumatin family.

Functionally, may be involved in disease resistance. This is Pathogenesis-related thaumatin-like protein 3.8 from Cryptomeria japonica (Japanese cedar).